A 678-amino-acid polypeptide reads, in one-letter code: Glutamate--cysteine ligase (678 aa).

It belongs to the glutamate--cysteine ligase type 3 family.

It carries out the reaction L-cysteine + L-glutamate + ATP = gamma-L-glutamyl-L-cysteine + ADP + phosphate + H(+). It participates in sulfur metabolism; glutathione biosynthesis; glutathione from L-cysteine and L-glutamate: step 1/2. Its activity is regulated as follows. Feedback inhibition by glutathione. Functionally, catalyzes the ATP-dependent condensation of cysteine and glutamate to form the dipeptide gamma-glutamylcysteine (gamma-GC), the first and rate-limiting step in the production of glutathione (GSH). This Saccharomyces cerevisiae (strain ATCC 204508 / S288c) (Baker's yeast) protein is Glutamate--cysteine ligase (GSH1).